The primary structure comprises 140 residues: Profilin-2 (140 aa).

N-acetylalanine is present on Ala-2.

Belongs to the profilin family. In terms of assembly, occurs in many kinds of cells as a complex with monomeric actin in a 1:1 ratio. Interacts with PFN2. Interacts with ACTMAP (via N-terminus); the interaction may facilitate efficient cleavage of the acetylated N-terminus of immature actin by ACTMAP. As to expression, highly expressed in brain, skeletal muscle and kidney and less strongly in heart, placenta, lung and liver.

Its subcellular location is the cytoplasm. The protein localises to the cytoskeleton. In terms of biological role, binds to actin and affects the structure of the cytoskeleton. At high concentrations, profilin prevents the polymerization of actin, whereas it enhances it at low concentrations. By binding to PIP2, it inhibits the formation of IP3 and DG. This chain is Profilin-2 (PFN2), found in Homo sapiens (Human).